The sequence spans 238 residues: MIREPFRYRETFAAILADTPAHADAAKRGMIAARQVLECYIARDPFFASTFFPYEPETDETLICHMANAAAHAGVGPMATVAGAIAAAGINAMMDAGATFGVIDNGGDIALVSDRDVRVGVHAGSAPVSDRIAFIVPPQEQHSYGICTSSATVGPSISFGMADAVTIFARDPLDADAWATAVCNRIRPDDHRVLETIDPSRVDGVYAIMGESVVSWGKVPPVVPARVDEQLIAAGDRL.

The protein belongs to the UPF0280 family.

The chain is UPF0280 protein Mboo_1274 from Methanoregula boonei (strain DSM 21154 / JCM 14090 / 6A8).